Consider the following 106-residue polypeptide: Large ribosomal subunit protein uL24 (106 aa).

It belongs to the universal ribosomal protein uL24 family. In terms of assembly, part of the 50S ribosomal subunit.

Its function is as follows. One of two assembly initiator proteins, it binds directly to the 5'-end of the 23S rRNA, where it nucleates assembly of the 50S subunit. One of the proteins that surrounds the polypeptide exit tunnel on the outside of the subunit. The polypeptide is Large ribosomal subunit protein uL24 (Albidiferax ferrireducens (strain ATCC BAA-621 / DSM 15236 / T118) (Rhodoferax ferrireducens)).